The primary structure comprises 66 residues: MPKMKTHRGAAKRVKRTGSGQLKRSRAFTSHLFANKNTKQKRQLRKAKLVSKSDMKRVKQLLAYKK.

Residues 1–16 show a composition bias toward basic residues; it reads MPKMKTHRGAAKRVKR. Residues 1-28 form a disordered region; that stretch reads MPKMKTHRGAAKRVKRTGSGQLKRSRAF.

This sequence belongs to the bacterial ribosomal protein bL35 family.

The polypeptide is Large ribosomal subunit protein bL35 (Staphylococcus epidermidis (strain ATCC 35984 / DSM 28319 / BCRC 17069 / CCUG 31568 / BM 3577 / RP62A)).